The primary structure comprises 1227 residues: Protein transport protein Sec31A (1227 aa).

WD repeat units lie at residues 4-47 (KEID…EIFE), 64-111 (SSAH…AGDT), 120-160 (KHTG…TPMT), 166-206 (QPLE…PIIK), 209-254 (DHNN…SPLR), 258-298 (SHTR…VLYE), and 301-342 (TNMQ…DGLR). The stretch at 397 to 430 (SFSFGGKLVTFENAKPQQQPGIDQQPQHHYVYVS) is one WD 8; interaction with SEC13 repeat. Disordered regions lie at residues 804-875 (EAIK…YSQA), 905-1008 (QPVA…GWND), and 1040-1075 (ADPQAQMQQPPAAPVGTPSFQPQQLSTGQQAPLGPY). The segment covering 905–924 (QPVAAPASASYPSPASNTNP) has biased composition (low complexity). Residues 925-945 (PYLPAAQPVPSPLYPGQPQPS) show a composition bias toward pro residues. Residues 995-1006 (PASQRTGPQNGW) are compositionally biased toward polar residues. Residues 1040 to 1049 (ADPQAQMQQP) show a composition bias toward low complexity. Residues 1057-1069 (PSFQPQQLSTGQQ) show a composition bias toward polar residues.

This sequence belongs to the WD repeat SEC31 family. COPII is composed of at least 5 proteins: the SEC23/24 complex, the SEC13/31 complex and SAR1. SEC13 and SEC31 make a 2:2 tetramer that forms the edge element of the COPII outer coat. The tetramer self-assembles in multiple copies to form the complete polyhedral cage. Interacts (via WD 8) with SEC13.

Its subcellular location is the cytoplasm. The protein localises to the cytoplasmic vesicle. The protein resides in the COPII-coated vesicle membrane. It localises to the endoplasmic reticulum membrane. In terms of biological role, component of the coat protein complex II (COPII) which promotes the formation of transport vesicles from the endoplasmic reticulum (ER). The coat has two main functions, the physical deformation of the endoplasmic reticulum membrane into vesicles and the selection of cargo molecules. This chain is Protein transport protein Sec31A (SEC31A), found in Gallus gallus (Chicken).